A 293-amino-acid chain; its full sequence is Forkhead box protein N5 (293 aa).

Residues 104-152 (TSPPLQLQRQLSNDYSTVEDSEDEAPTSCSDVLTDDDDSYNPWQPKHKR) are disordered. Positions 106 to 119 (PPLQLQRQLSNDYS) are enriched in polar residues. Positions 176–273 (RPPLNYCNLI…NEMHALSDDL (98 aa)) form a DNA-binding region, fork-head.

The protein localises to the nucleus. This Xenopus tropicalis (Western clawed frog) protein is Forkhead box protein N5.